We begin with the raw amino-acid sequence, 121 residues long: Large ribosomal subunit protein eL8 (121 aa).

The protein belongs to the eukaryotic ribosomal protein eL8 family. In terms of assembly, part of the 50S ribosomal subunit. Probably part of the RNase P complex.

The protein resides in the cytoplasm. In terms of biological role, multifunctional RNA-binding protein that recognizes the K-turn motif in ribosomal RNA, the RNA component of RNase P, box H/ACA, box C/D and box C'/D' sRNAs. This is Large ribosomal subunit protein eL8 from Thermoplasma acidophilum (strain ATCC 25905 / DSM 1728 / JCM 9062 / NBRC 15155 / AMRC-C165).